Here is a 434-residue protein sequence, read N- to C-terminus: uncharacterized protein (434 aa).

The next 11 helical transmembrane spans lie at 50 to 70, 72 to 92, 95 to 115, 135 to 155, 158 to 178, 179 to 199, 229 to 249, 288 to 308, 319 to 339, 376 to 396, and 412 to 432; these read GSIA…SFTL, TGLL…VLAI, LMAF…LLPV, SPVV…QFGW, SLIA…YFPH, LNPE…IAIT, LPYI…KIFA, GFVP…VAGF, PNPM…VLLL, IFAA…AIYF, and VVAV…GLFV.

The protein localises to the cell membrane. This is an uncharacterized protein from Escherichia coli (strain K12).